We begin with the raw amino-acid sequence, 1380 residues long: DNA-directed RNA polymerase subunit beta (1380 aa).

It belongs to the RNA polymerase beta chain family. The RNAP catalytic core consists of 2 alpha, 1 beta, 1 beta' and 1 omega subunit. When a sigma factor is associated with the core the holoenzyme is formed, which can initiate transcription.

It catalyses the reaction RNA(n) + a ribonucleoside 5'-triphosphate = RNA(n+1) + diphosphate. DNA-dependent RNA polymerase catalyzes the transcription of DNA into RNA using the four ribonucleoside triphosphates as substrates. This chain is DNA-directed RNA polymerase subunit beta, found in Nitrobacter winogradskyi (strain ATCC 25391 / DSM 10237 / CIP 104748 / NCIMB 11846 / Nb-255).